Reading from the N-terminus, the 75-residue chain is DNA-directed RNA polymerase subunit omega (75 aa).

This sequence belongs to the RNA polymerase subunit omega family. In terms of assembly, the RNAP catalytic core consists of 2 alpha, 1 beta, 1 beta' and 1 omega subunit. When a sigma factor is associated with the core the holoenzyme is formed, which can initiate transcription.

The catalysed reaction is RNA(n) + a ribonucleoside 5'-triphosphate = RNA(n+1) + diphosphate. Its function is as follows. Promotes RNA polymerase assembly. Latches the N- and C-terminal regions of the beta' subunit thereby facilitating its interaction with the beta and alpha subunits. The polypeptide is DNA-directed RNA polymerase subunit omega (Lysinibacillus sphaericus (strain C3-41)).